The following is an 805-amino-acid chain: Cation channel sperm-associated auxiliary subunit delta (805 aa).

Residues 1–16 (MLVLMLAAAVATMVRA) form the signal peptide. The Extracellular portion of the chain corresponds to 17-723 (HTLCRVHTVR…ALPVTKFQPL (707 aa)). Disulfide bonds link C20–C366, C56–C143, C142–C149, C384–C493, C507–C701, C522–C569, and C621–C651. N-linked (GlcNAc...) asparagine glycans are attached at residues N227, N419, N469, N535, and N627. A helical membrane pass occupies residues 724–745 (LTILLMVTTTLLTAWLAYAIPK). Over 746 to 805 (QLRSEKGQRLLGFCYQILQLCLGVCFCTWLRGKLRQWLRPRRVKDQNRGKVRVAQKHPET) the chain is Cytoplasmic.

It belongs to the CATSPERD family. As to quaternary structure, component of the CatSper complex or CatSpermasome composed of the core pore-forming members CATSPER1, CATSPER2, CATSPER3 and CATSPER4 as well as auxiliary members CATSPERB, CATSPERG2, CATSPERD, CATSPERE, CATSPERZ, C2CD6/CATSPERT, SLCO6C1, TMEM249, TMEM262 and EFCAB9. HSPA1 may be an additional auxiliary complex member. The core complex members CATSPER1, CATSPER2, CATSPER3 and CATSPER4 form a heterotetrameric channel. The auxiliary CATSPERB, CATSPERG2, CATSPERD and CATSPERE subunits form a pavilion-like structure over the pore which stabilizes the complex through interactions with CATSPER4, CATSPER3, CATSPER1 and CATSPER2 respectively. SLCO6C1 interacts with CATSPERE and TMEM262/CATSPERH interacts with CATSPERB, further stabilizing the complex. C2CD6/CATSPERT interacts at least with CATSPERD and is required for targeting the CatSper complex in the flagellar membrane. In terms of tissue distribution, testis-specific.

Its subcellular location is the cell projection. The protein resides in the cilium. It localises to the flagellum membrane. Its function is as follows. Auxiliary component of the CatSper complex, a complex involved in sperm cell hyperactivation. Sperm cell hyperactivation is needed for sperm motility which is essential late in the preparation of sperm for fertilization. Required for CATSPER1 stability before intraflagellar transport and/or incorporation of the CatSper complex channel into the flagellar membrane. The chain is Cation channel sperm-associated auxiliary subunit delta from Mus musculus (Mouse).